The primary structure comprises 266 residues: Pre-mRNA-splicing factor PRP11 (266 aa).

Residues 1–21 (MNYLEGVGSKKGGGGIASESQ) are disordered. The segment at 66-96 (LVCKLCNTMHMSWSSVERHLGGKKHGLNVLR) adopts a Matrin-type zinc-finger fold.

It belongs to the SF3A2 family. Belongs to the CWC complex (or CEF1-associated complex), a spliceosome sub-complex reminiscent of a late-stage spliceosome composed of the U2, U5 and U6 snRNAs and at least BUD13, BUD31, BRR2, CDC40, CEF1, CLF1, CUS1, CWC2, CWC15, CWC21, CWC22, CWC23, CWC24, CWC25, CWC27, ECM2, HSH155, IST3, ISY1, LEA1, MSL1, NTC20, PRP8, PRP9, PRP11, PRP19, PRP21, PRP22, PRP45, PRP46, SLU7, SMB1, SMD1, SMD2, SMD3, SMX2, SMX3, SNT309, SNU114, SPP2, SYF1, SYF2, RSE1 and YJU2. Interacts with CUS2.

Its subcellular location is the nucleus. In terms of biological role, mRNA splicing factors, PRP9, PRP11, and PRP21, are necessary for addition of the U2 snRNP to the pre-mRNA in an early step of spliceosome assembly. This is Pre-mRNA-splicing factor PRP11 (PRP11) from Saccharomyces cerevisiae (strain ATCC 204508 / S288c) (Baker's yeast).